The chain runs to 67 residues: UPF0337 protein CC_0938 (67 aa).

The tract at residues 37–67 (AAQKAKGDLQNKVGKAQDKARRRDQALNARL) is disordered. Residues 41 to 61 (AKGDLQNKVGKAQDKARRRDQ) are compositionally biased toward basic and acidic residues.

This sequence belongs to the UPF0337 (CsbD) family.

This Caulobacter vibrioides (strain ATCC 19089 / CIP 103742 / CB 15) (Caulobacter crescentus) protein is UPF0337 protein CC_0938.